The chain runs to 773 residues: Elongin-A (773 aa).

A TFIIS N-terminal domain is found at 4-79; the sequence is ESALQVVEKL…AQWKKLVPVE (76 aa). Basic and acidic residues predominate over residues 79–93; that stretch reads ERNNEAEDQDFEKSN. Residues 79–480 form a disordered region; that stretch reads ERNNEAEDQD…PRKVPTDVLP (402 aa). Residues 112–124 show a composition bias toward polar residues; sequence YQESWQASGSQPY. Positions 136-156 are enriched in basic and acidic residues; that stretch reads LPELERPHKVAHGHERRDERK. Over residues 162–174 the composition is skewed to low complexity; the sequence is SPPYSSDPESSDY. Residue S195 is modified to Phosphoserine. Positions 239–248 are enriched in basic residues; the sequence is KPHKSSHKEK. Basic and acidic residues-rich tracts occupy residues 249–265 and 271–304; these read RPVD…MGRE and SSKE…EGNS. The residue at position 310 (S310) is a Phosphoserine. Composition is skewed to basic and acidic residues over residues 317-339 and 368-380; these read SDNH…KNKQ and QEGK…DRKS. S380 and S383 each carry phosphoserine. K430 carries the N6-acetyllysine modification. S515 carries the post-translational modification Phosphoserine. Residues 521 to 680 form an activation domain region; that stretch reads EAGFTGRRMN…PPRDVRRRQE (160 aa). The BC-box stretch occupies residues 549 to 558; sequence TLHQQCIRVL. Residues 565–609 form the F-box domain; the sequence is IFEVGGVPYSVLEPVLERCTPDQLYRIEECNHVLIEETDQLWKVH. The segment at 671-747 is disordered; sequence PPRDVRRRQE…VASSSVSYDP (77 aa). The segment covering 704-718 has biased composition (low complexity); sequence SSHVPASNSSSSFHS. A compositionally biased stretch (polar residues) spans 728–744; it reads PSTSSAHLAPVASSSVS.

In terms of assembly, heterotrimer of an A (ELOA, ELOA2 or ELOA3P), ELOB and ELOC subunit. Part of a multisubunit ubiquitin ligase complex consisting of elongin BC complex (ELOB and ELOC), elongin A/ELOA, RBX1 and CUL5. Interacts with ERCC6; the interaction is induced by DNA damaging agents or inhibitors of RNA polymerase II elongation. Interacts (via BC-box) with CUL5.

The protein localises to the nucleus. Functionally, SIII, also known as elongin, is a general transcription elongation factor that increases the RNA polymerase II transcription elongation past template-encoded arresting sites. Subunit A is transcriptionally active and its transcription activity is strongly enhanced by binding to the dimeric complex of the SIII regulatory subunits B and C (elongin BC complex). Its function is as follows. As part of a multisubunit complex composed of elongin BC complex (ELOB and ELOC), elongin A/ELOA, RBX1 and CUL5; polyubiquitinates monoubiquitinated POLR2A. The sequence is that of Elongin-A (Eloa) from Rattus norvegicus (Rat).